A 296-amino-acid chain; its full sequence is Phosphatidylglycerol--prolipoprotein diacylglyceryl transferase (296 aa).

The next 3 helical transmembrane spans lie at Leu17–Gly37, Met59–Tyr79, and Gly97–Trp117. Residue Arg142 coordinates a 1,2-diacyl-sn-glycero-3-phospho-(1'-sn-glycerol). 2 helical membrane passes run Met230–Phe250 and Leu265–Trp285.

Belongs to the Lgt family.

The protein localises to the cell inner membrane. The enzyme catalyses L-cysteinyl-[prolipoprotein] + a 1,2-diacyl-sn-glycero-3-phospho-(1'-sn-glycerol) = an S-1,2-diacyl-sn-glyceryl-L-cysteinyl-[prolipoprotein] + sn-glycerol 1-phosphate + H(+). It functions in the pathway protein modification; lipoprotein biosynthesis (diacylglyceryl transfer). Functionally, catalyzes the transfer of the diacylglyceryl group from phosphatidylglycerol to the sulfhydryl group of the N-terminal cysteine of a prolipoprotein, the first step in the formation of mature lipoproteins. The sequence is that of Phosphatidylglycerol--prolipoprotein diacylglyceryl transferase from Burkholderia pseudomallei (strain 668).